Here is a 122-residue protein sequence, read N- to C-terminus: MIQPQTHLNVADNSGARELMCIRIIGASNRRYAHIGDIIVAVIKEAVPNMPLERSELVRAVIVRTRKELKRDNGMIIRYDDNAAVVIDQEGNPKGTRIFGAIPRELRPLNFTKIVSLAPEVL.

This sequence belongs to the universal ribosomal protein uL14 family. Part of the 50S ribosomal subunit.

It is found in the plastid. Its function is as follows. Binds to 23S rRNA. This Cuscuta exaltata (Tall dodder) protein is Large ribosomal subunit protein uL14c.